A 96-amino-acid chain; its full sequence is Aspartyl/glutamyl-tRNA(Asn/Gln) amidotransferase subunit C (96 aa).

This sequence belongs to the GatC family. As to quaternary structure, heterotrimer of A, B and C subunits.

It catalyses the reaction L-glutamyl-tRNA(Gln) + L-glutamine + ATP + H2O = L-glutaminyl-tRNA(Gln) + L-glutamate + ADP + phosphate + H(+). The enzyme catalyses L-aspartyl-tRNA(Asn) + L-glutamine + ATP + H2O = L-asparaginyl-tRNA(Asn) + L-glutamate + ADP + phosphate + 2 H(+). In terms of biological role, allows the formation of correctly charged Asn-tRNA(Asn) or Gln-tRNA(Gln) through the transamidation of misacylated Asp-tRNA(Asn) or Glu-tRNA(Gln) in organisms which lack either or both of asparaginyl-tRNA or glutaminyl-tRNA synthetases. The reaction takes place in the presence of glutamine and ATP through an activated phospho-Asp-tRNA(Asn) or phospho-Glu-tRNA(Gln). This chain is Aspartyl/glutamyl-tRNA(Asn/Gln) amidotransferase subunit C, found in Symbiobacterium thermophilum (strain DSM 24528 / JCM 14929 / IAM 14863 / T).